The sequence spans 408 residues: Phosphoglycerate kinase (408 aa).

Residues 24–26 (DLN), arginine 39, 62–65 (HLGR), arginine 121, and arginine 161 each bind substrate. ATP contacts are provided by residues lysine 211, glycine 307, glutamate 338, and 364-367 (GGDS).

The protein belongs to the phosphoglycerate kinase family. In terms of assembly, monomer.

Its subcellular location is the cytoplasm. It catalyses the reaction (2R)-3-phosphoglycerate + ATP = (2R)-3-phospho-glyceroyl phosphate + ADP. The protein operates within carbohydrate degradation; glycolysis; pyruvate from D-glyceraldehyde 3-phosphate: step 2/5. In Paenarthrobacter aurescens (strain TC1), this protein is Phosphoglycerate kinase.